A 431-amino-acid polypeptide reads, in one-letter code: Glutamate-1-semialdehyde 2,1-aminomutase (431 aa).

K265 is modified (N6-(pyridoxal phosphate)lysine).

Belongs to the class-III pyridoxal-phosphate-dependent aminotransferase family. HemL subfamily. In terms of assembly, homodimer. Pyridoxal 5'-phosphate is required as a cofactor.

It localises to the cytoplasm. The catalysed reaction is (S)-4-amino-5-oxopentanoate = 5-aminolevulinate. It functions in the pathway porphyrin-containing compound metabolism; protoporphyrin-IX biosynthesis; 5-aminolevulinate from L-glutamyl-tRNA(Glu): step 2/2. In Vibrio parahaemolyticus serotype O3:K6 (strain RIMD 2210633), this protein is Glutamate-1-semialdehyde 2,1-aminomutase.